The primary structure comprises 100 residues: Histone H3-like 2 (100 aa).

Residues 1–46 are disordered; it reads MARMKHTARMSTGGKAPRKQLASKALRKAPPPPTKGVKQPTTTTSG.

It belongs to the histone H3 family. The nucleosome is a histone octamer containing two molecules each of H2A, H2B, H3 and H4 assembled in one H3-H4 heterotetramer and two H2A-H2B heterodimers. The octamer wraps approximately 147 bp of DNA. Pollen specific.

Its subcellular location is the nucleus. The protein localises to the chromosome. Its function is as follows. Core component of nucleosome. Nucleosomes wrap and compact DNA into chromatin, limiting DNA accessibility to the cellular machineries which require DNA as a template. Histones thereby play a central role in transcription regulation, DNA repair, DNA replication and chromosomal stability. DNA accessibility is regulated via a complex set of post-translational modifications of histones, also called histone code, and nucleosome remodeling. The chain is Histone H3-like 2 (gcH3) from Lilium longiflorum (Trumpet lily).